Reading from the N-terminus, the 212-residue chain is Guanylate kinase (212 aa).

In terms of domain architecture, Guanylate kinase-like spans 5–187 (GILCIISAPS…ALMHLQSIML (183 aa)). 12–19 (APSGTGKS) is an ATP binding site.

The protein belongs to the guanylate kinase family.

It is found in the cytoplasm. The enzyme catalyses GMP + ATP = GDP + ADP. Functionally, essential for recycling GMP and indirectly, cGMP. This Blochmanniella pennsylvanica (strain BPEN) protein is Guanylate kinase.